The sequence spans 442 residues: PCI domain-containing protein C1105.07c (442 aa).

One can recognise a PCI domain in the interval 224-415; it reads VTFRYYLGRC…STLVLKKDPS (192 aa).

Its subcellular location is the cytoplasm. It is found in the nucleus envelope. The protein is PCI domain-containing protein C1105.07c of Schizosaccharomyces pombe (strain 972 / ATCC 24843) (Fission yeast).